The chain runs to 459 residues: Trigger factor (459 aa).

One can recognise a PPIase FKBP-type domain in the interval glycine 166–proline 245.

It belongs to the FKBP-type PPIase family. Tig subfamily.

The protein localises to the cytoplasm. It catalyses the reaction [protein]-peptidylproline (omega=180) = [protein]-peptidylproline (omega=0). In terms of biological role, involved in protein export. Acts as a chaperone by maintaining the newly synthesized protein in an open conformation. Functions as a peptidyl-prolyl cis-trans isomerase. In Bifidobacterium longum subsp. infantis (strain ATCC 15697 / DSM 20088 / JCM 1222 / NCTC 11817 / S12), this protein is Trigger factor.